The chain runs to 188 residues: Probable nicotinate-nucleotide adenylyltransferase (188 aa).

This sequence belongs to the NadD family.

It catalyses the reaction nicotinate beta-D-ribonucleotide + ATP + H(+) = deamido-NAD(+) + diphosphate. The protein operates within cofactor biosynthesis; NAD(+) biosynthesis; deamido-NAD(+) from nicotinate D-ribonucleotide: step 1/1. Catalyzes the reversible adenylation of nicotinate mononucleotide (NaMN) to nicotinic acid adenine dinucleotide (NaAD). The chain is Probable nicotinate-nucleotide adenylyltransferase from Listeria innocua serovar 6a (strain ATCC BAA-680 / CLIP 11262).